The chain runs to 301 residues: uncharacterized protein (301 aa).

Residues 1 to 22 form the signal peptide; the sequence is MPGRFTVALVIALGGTCGVADA. The region spanning 31–300 is the GP-PDE domain; that stretch reads PMIVAHRAGT…DSPLAAQQWR (270 aa).

This is an uncharacterized protein from Mycobacterium tuberculosis (strain ATCC 25618 / H37Rv).